The chain runs to 471 residues: Alpha-galactosidase 5 (471 aa).

Residues 1–18 (MFAFYFLTACTTLKGVFG) form the signal peptide. An intrachain disulfide couples cysteine 42 to cysteine 74. Positions 72 and 73 each coordinate substrate. N-linked (GlcNAc...) asparagine glycosylation is present at asparagine 105. Cysteines 121 and 151 form a disulfide. Lysine 147 contacts substrate. The Nucleophile role is filled by aspartate 149. Asparagine 175 carries an N-linked (GlcNAc...) asparagine glycan. Position 205 (arginine 205) interacts with substrate. Catalysis depends on aspartate 209, which acts as the Proton donor. Intrachain disulfides connect cysteine 221-cysteine 237 and cysteine 223-cysteine 230. Glutamine 251 contacts substrate. N-linked (GlcNAc...) asparagine glycosylation is found at asparagine 270, asparagine 370, asparagine 403, asparagine 422, asparagine 435, and asparagine 454.

Belongs to the glycosyl hydrolase 27 family. As to quaternary structure, homotetramer.

Its subcellular location is the secreted. The catalysed reaction is Hydrolysis of terminal, non-reducing alpha-D-galactose residues in alpha-D-galactosides, including galactose oligosaccharides, galactomannans and galactolipids.. This chain is Alpha-galactosidase 5 (MEL5), found in Saccharomyces cerevisiae (Baker's yeast).